The following is a 146-amino-acid chain: Phospho-2-dehydro-3-deoxyheptonate aldolase (146 aa).

This sequence belongs to the class-II DAHP synthase family. As to quaternary structure, homodimer.

The catalysed reaction is D-erythrose 4-phosphate + phosphoenolpyruvate + H2O = 7-phospho-2-dehydro-3-deoxy-D-arabino-heptonate + phosphate. It functions in the pathway metabolic intermediate biosynthesis; chorismate biosynthesis; chorismate from D-erythrose 4-phosphate and phosphoenolpyruvate: step 1/7. The sequence is that of Phospho-2-dehydro-3-deoxyheptonate aldolase from Streptomyces lividans.